A 239-amino-acid polypeptide reads, in one-letter code: UDP-2,3-diacylglucosamine hydrolase (239 aa).

Residues Asp8, His10, Asp41, Asn78, and His113 each coordinate Mn(2+). Residue 78-79 (NR) coordinates substrate. Substrate-binding residues include Asp121, Ser159, Asn163, Lys166, and His194. Residues His194 and His196 each coordinate Mn(2+).

Belongs to the LpxH family. Mn(2+) is required as a cofactor.

Its subcellular location is the cell inner membrane. It carries out the reaction UDP-2-N,3-O-bis[(3R)-3-hydroxytetradecanoyl]-alpha-D-glucosamine + H2O = 2-N,3-O-bis[(3R)-3-hydroxytetradecanoyl]-alpha-D-glucosaminyl 1-phosphate + UMP + 2 H(+). It participates in glycolipid biosynthesis; lipid IV(A) biosynthesis; lipid IV(A) from (3R)-3-hydroxytetradecanoyl-[acyl-carrier-protein] and UDP-N-acetyl-alpha-D-glucosamine: step 4/6. Its function is as follows. Hydrolyzes the pyrophosphate bond of UDP-2,3-diacylglucosamine to yield 2,3-diacylglucosamine 1-phosphate (lipid X) and UMP by catalyzing the attack of water at the alpha-P atom. Involved in the biosynthesis of lipid A, a phosphorylated glycolipid that anchors the lipopolysaccharide to the outer membrane of the cell. In Shewanella sp. (strain MR-4), this protein is UDP-2,3-diacylglucosamine hydrolase.